The chain runs to 307 residues: Methionyl-tRNA formyltransferase (307 aa).

Residue 110–113 (SLLP) coordinates (6S)-5,6,7,8-tetrahydrofolate.

The protein belongs to the Fmt family.

The catalysed reaction is L-methionyl-tRNA(fMet) + (6R)-10-formyltetrahydrofolate = N-formyl-L-methionyl-tRNA(fMet) + (6S)-5,6,7,8-tetrahydrofolate + H(+). Its function is as follows. Attaches a formyl group to the free amino group of methionyl-tRNA(fMet). The formyl group appears to play a dual role in the initiator identity of N-formylmethionyl-tRNA by promoting its recognition by IF2 and preventing the misappropriation of this tRNA by the elongation apparatus. In Rhodococcus erythropolis (strain PR4 / NBRC 100887), this protein is Methionyl-tRNA formyltransferase.